A 676-amino-acid polypeptide reads, in one-letter code: Solute carrier family 26 member 10 (676 aa).

The interval 1-24 (MSGPLASGTCSDPEEVSDLKSPLS) is disordered. 11 helical membrane-spanning segments follow: residues 101-121 (AVAG…FALL), 124-144 (VPPV…SLLG), 149-165 (LSTG…GSVV), 190-210 (VGAA…MFVL), 226-246 (ALTS…LLGL), 267-287 (ALSQ…VLLV), 300-320 (LLTP…LCFT), 353-373 (ILAD…SLAS), 398-418 (ISSL…SLLV), 426-446 (LAGL…RPFF), and 487-507 (IVTW…VGVV). Positions 539 to 660 (ESRKLLQVPG…VSVQDAAAHA (122 aa)) constitute an STAS domain.

This sequence belongs to the SLC26A/SulP transporter (TC 2.A.53) family.

It localises to the membrane. Chloride/bicarbonate exchanger. This Mus musculus (Mouse) protein is Solute carrier family 26 member 10 (Slc26a10).